Reading from the N-terminus, the 330-residue chain is MKFVDRFRGAVAGMLRRLVVEAMGVALLSALIGVVGSAPAEAFSRPGLPVEYLQVPSPSMGRDIKVQFQNGGANSPALYLLDGLRAQDDFSGWDINTTAFEWYYQSGISVVMPVGGQSSFYSDWYSPACGKAGCQTYKWETFLTSELPQYLQSNKQIKPTGSAAVGLSMAGLSALTLAIYHPDQFIYVGSMSGLLDPSNAMGPSLIGLAMGDAGGYKAADMWGPSTDPAWKRNDPTVNVGTLIANNTRIWMYCGNGKPTELGGNNLPAKLLEGLVRTSNIKFQDGYNAGGGHNAVFNFPDSGTHSWEYWGEQLNDMKPDLQQYLGATPGA.

Residues 1–42 (MKFVDRFRGAVAGMLRRLVVEAMGVALLSALIGVVGSAPAEA) form the signal peptide. 84 to 85 (LR) serves as a coordination point for substrate. The tract at residues 100–110 (FEWYYQSGISV) is fibronectin-binding. Residues cysteine 129 and cysteine 134 are joined by a disulfide bond. Residues serine 168 and aspartate 196 each contribute to the substrate site. Residue serine 168 is the Nucleophile of the active site. The active site involves glutamate 272. Residues 274–277 (LVRT), lysine 281, and 304–306 (HSW) contribute to the substrate site. Histidine 304 is a catalytic residue.

Belongs to the mycobacterial A85 antigen family. Homodimer.

The protein resides in the secreted. It localises to the cell wall. The protein localises to the cytoplasm. The enzyme catalyses an acyl-CoA + a 1,2-diacyl-sn-glycerol = a triacyl-sn-glycerol + CoA. It catalyses the reaction 2 alpha,alpha'-trehalose 6-mycolate = alpha,alpha'-trehalose 6,6'-bismycolate + alpha,alpha-trehalose. Functionally, the antigen 85 proteins (FbpA, FbpB, FbpC) are responsible for the high affinity of mycobacteria for fibronectin, a large adhesive glycoprotein, which facilitates the attachment of M.tuberculosis to murine alveolar macrophages (AMs). They also help to maintain the integrity of the cell wall by catalyzing the transfer of mycolic acids to cell wall arabinogalactan, and through the synthesis of alpha,alpha-trehalose dimycolate (TDM, cord factor). They catalyze the transfer of a mycoloyl residue from one molecule of alpha,alpha-trehalose monomycolate (TMM) to another TMM, leading to the formation of TDM. FbpA mediates triacylglycerol (TAG) formation with long-chain acyl-CoA as the acyl donor and 1,2-dipalmitoyl-sn-glycerol (1,2-dipalmitin) as the acyl acceptor. It has a preference for C26:0-CoA over C18:1-CoA. This Mycobacterium leprae (strain TN) protein is Diacylglycerol acyltransferase/mycolyltransferase Ag85A (fbpA).